The following is a 150-amino-acid chain: Large ribosomal subunit protein bL9 (150 aa).

It belongs to the bacterial ribosomal protein bL9 family.

Binds to the 23S rRNA. The chain is Large ribosomal subunit protein bL9 from Streptococcus pyogenes serotype M2 (strain MGAS10270).